Here is a 456-residue protein sequence, read N- to C-terminus: MELSSLTAVSPVDGRYGDKVSALRGIFSEYGLLKFRVQVEVRWLQKLAAHAAIKEVPAFAADAIGYLDAIVASFSEEDAARIKTIERTTNHDVKAVEYFLKEKVAEIPELHAVSEFIHFACTSEDINNLSHALMLKTARDEVILPYWRQLIDGIKDLAVQYRDIPLLSRTHGQPATPSTIGKEMANVAYRMERQYRQLNQVEILGKINGAVGNYNAHIAAYPEVDWHQFSEEFVTSLGIQWNPYTTQIEPHDYIAELFDCVARFNTILIDFDRDVWGYIALNHFKQKTIAGEIGSSTMPHKVNPIDFENSEGNLGLSNAVLQHLASKLPVSRWQRDLTDSTVLRNLGVGIGYALIAYQSTLKGVSKLEVNRDHLLDELDHNWEVLAEPIQTVMRRYGIEKPYEKLKELTRGKRVDAEGMKQFIDGLALPEEEKARLKAMTPANYIGRAITMVDELK.

N(6)-(1,2-dicarboxyethyl)-AMP is bound by residues 15 to 16 (RY) and 90 to 92 (NHD). Residue Lys-94 is modified to N6-acetyllysine. 122–123 (TS) is a binding site for N(6)-(1,2-dicarboxyethyl)-AMP. The Proton donor/acceptor role is filled by His-171. Residue Gln-247 participates in N(6)-(1,2-dicarboxyethyl)-AMP binding. Ser-295 functions as the Proton donor/acceptor in the catalytic mechanism. Residues Ser-296, 301–303 (KVN), Asn-309, Arg-335, and 340–344 (STVLR) contribute to the N(6)-(1,2-dicarboxyethyl)-AMP site. Lys-366 bears the N6-acetyllysine mark.

It belongs to the lyase 1 family. Adenylosuccinate lyase subfamily. As to quaternary structure, homotetramer. Residues from neighboring subunits contribute catalytic and substrate-binding residues to each active site.

The catalysed reaction is N(6)-(1,2-dicarboxyethyl)-AMP = fumarate + AMP. It catalyses the reaction (2S)-2-[5-amino-1-(5-phospho-beta-D-ribosyl)imidazole-4-carboxamido]succinate = 5-amino-1-(5-phospho-beta-D-ribosyl)imidazole-4-carboxamide + fumarate. The protein operates within purine metabolism; AMP biosynthesis via de novo pathway; AMP from IMP: step 2/2. Its pathway is purine metabolism; IMP biosynthesis via de novo pathway; 5-amino-1-(5-phospho-D-ribosyl)imidazole-4-carboxamide from 5-amino-1-(5-phospho-D-ribosyl)imidazole-4-carboxylate: step 2/2. Its function is as follows. Catalyzes two reactions in de novo purine nucleotide biosynthesis. Catalyzes the breakdown of 5-aminoimidazole- (N-succinylocarboxamide) ribotide (SAICAR or 2-[5-amino-1-(5-phospho-beta-D-ribosyl)imidazole-4-carboxamido]succinate) to 5-aminoimidazole-4-carboxamide ribotide (AICAR or 5-amino-1-(5-phospho-beta-D-ribosyl)imidazole-4-carboxamide) and fumarate, and of adenylosuccinate (ADS or N(6)-(1,2-dicarboxyethyl)-AMP) to adenosine monophosphate (AMP) and fumarate. In Escherichia coli O6:H1 (strain CFT073 / ATCC 700928 / UPEC), this protein is Adenylosuccinate lyase (purB).